Consider the following 175-residue polypeptide: NADH-ubiquinone oxidoreductase chain 6 (175 aa).

A run of 6 helical transmembrane segments spans residues 1 to 21, 25 to 45, 47 to 67, 88 to 108, 115 to 137, and 149 to 169; these read MMTY…IGSP, SPIY…GMVL, FGGS…MLVV, VVLG…LYVL, LVFK…GVFS, and YGVW…VVIM.

The protein belongs to the complex I subunit 6 family. Core subunit of respiratory chain NADH dehydrogenase (Complex I) which is composed of 45 different subunits.

Its subcellular location is the mitochondrion inner membrane. It carries out the reaction a ubiquinone + NADH + 5 H(+)(in) = a ubiquinol + NAD(+) + 4 H(+)(out). In terms of biological role, core subunit of the mitochondrial membrane respiratory chain NADH dehydrogenase (Complex I) which catalyzes electron transfer from NADH through the respiratory chain, using ubiquinone as an electron acceptor. Essential for the catalytic activity and assembly of complex I. The polypeptide is NADH-ubiquinone oxidoreductase chain 6 (MT-ND6) (Hippopotamus amphibius (Hippopotamus)).